A 229-amino-acid chain; its full sequence is NADH dehydrogenase [ubiquinone] iron-sulfur protein 8, mitochondrial (229 aa).

The transit peptide at 1-41 directs the protein to the mitochondrion; sequence MAAILARKSLSALRSRQLVLAGHTIEGTNGYNRTLLGTRSF. 2 consecutive 4Fe-4S ferredoxin-type domains span residues 121–150 and 160–189; these read RRYATGEERCIACKLCEAICPAQAITIEAE and TRYDIDMTKCIYCGFCQEACPVDAIVEGPN. Positions 130, 133, 136, 140, 169, 172, 175, and 179 each coordinate [4Fe-4S] cluster.

Belongs to the complex I 23 kDa subunit family. As to quaternary structure, complex I is composed of about 45 different subunits. This is a component of the iron-sulfur (IP) fragment of the enzyme. [4Fe-4S] cluster serves as cofactor. Lowest expression found in storage tissues of tubers. Higher expression in older leaves than younger ones. Highest expression found in flowers.

It is found in the mitochondrion inner membrane. It catalyses the reaction a ubiquinone + NADH + 5 H(+)(in) = a ubiquinol + NAD(+) + 4 H(+)(out). Its function is as follows. Core subunit of the mitochondrial membrane respiratory chain NADH dehydrogenase (Complex I) that is believed to belong to the minimal assembly required for catalysis. Complex I functions in the transfer of electrons from NADH to the respiratory chain. The immediate electron acceptor for the enzyme is believed to be ubiquinone. May donate electrons to ubiquinone. The polypeptide is NADH dehydrogenase [ubiquinone] iron-sulfur protein 8, mitochondrial (Solanum tuberosum (Potato)).